The sequence spans 154 residues: RxLR effector protein PexRD24 (154 aa).

Residues 1 to 22 form the signal peptide; it reads MHSSLLWLGAVVALLAVNNVTA. Positions 53–67 match the RxLR-dEER motif; the sequence is RSLRAVETSEDEEER. Position 138 (K138) is a short sequence motif, PP1c-binding motif.

It belongs to the RxLR effector family. Interacts with the potato PP1c family proteins PP1c-1, PP1c-2 and PP1c-3.

The protein resides in the secreted. Its subcellular location is the host nucleus. It localises to the host nucleoplasm. The protein localises to the host nucleolus. Its function is as follows. Effector that interacts with isoforms of host protein phosphatase type 1c (PP1c), mimicking a regulatory subunit and causing their re-localization within the host nucleus. The holoenzymes formed with PP1c isoforms act to promote late blight by attenuating jasmonic acid (JA)- and salicylic acid (SA)-mediated transcriptional responses of the host plant. This is RxLR effector protein PexRD24 from Phytophthora infestans (strain T30-4) (Potato late blight agent).